The primary structure comprises 310 residues: Ribosomal RNA small subunit methyltransferase H (310 aa).

Residues 32 to 34, Asp-51, Phe-78, Asp-99, and Gln-106 each bind S-adenosyl-L-methionine; that span reads AGH.

This sequence belongs to the methyltransferase superfamily. RsmH family.

Its subcellular location is the cytoplasm. It carries out the reaction cytidine(1402) in 16S rRNA + S-adenosyl-L-methionine = N(4)-methylcytidine(1402) in 16S rRNA + S-adenosyl-L-homocysteine + H(+). Specifically methylates the N4 position of cytidine in position 1402 (C1402) of 16S rRNA. This chain is Ribosomal RNA small subunit methyltransferase H, found in Macrococcus caseolyticus (strain JCSC5402) (Macrococcoides caseolyticum).